Reading from the N-terminus, the 63-residue chain is Progonadoliberin-1 (63 aa).

A Pyrrolidone carboxylic acid modification is found at Gln-1. Gly-10 carries the post-translational modification Glycine amide.

This sequence belongs to the GnRH family. In terms of processing, the precursor is cleaved by ACE, which removes the Gly-Lys-Arg peptide at the C-terminus, leading to mature hormone. The mature form of Gonadoliberin-1 is also cleaved and degraded by ACE.

The protein resides in the secreted. Stimulates the secretion of gonadotropins; it stimulates the secretion of both luteinizing and follicle-stimulating hormones. The sequence is that of Progonadoliberin-1 (GNRH1) from Mesocricetus auratus (Golden hamster).